The chain runs to 316 residues: Transaldolase (316 aa).

K132 serves as the catalytic Schiff-base intermediate with substrate.

This sequence belongs to the transaldolase family. Type 1 subfamily. As to quaternary structure, homodimer.

The protein resides in the cytoplasm. The catalysed reaction is D-sedoheptulose 7-phosphate + D-glyceraldehyde 3-phosphate = D-erythrose 4-phosphate + beta-D-fructose 6-phosphate. The protein operates within carbohydrate degradation; pentose phosphate pathway; D-glyceraldehyde 3-phosphate and beta-D-fructose 6-phosphate from D-ribose 5-phosphate and D-xylulose 5-phosphate (non-oxidative stage): step 2/3. Transaldolase is important for the balance of metabolites in the pentose-phosphate pathway. The protein is Transaldolase of Vibrio campbellii (strain ATCC BAA-1116).